The chain runs to 108 residues: uncharacterized protein (108 aa).

Residues 7-106 (CPRFEKAVDI…WATEWIDPSF (100 aa)) enclose the HTH hxlR-type domain.

This is an uncharacterized protein from Bacillus subtilis (strain 168).